The chain runs to 434 residues: MAHMDFPFYTPKDAFPVGGAVRDLLLGRRPTDLDYAALDPEKAAEEAKRRLGGSLFPLDPKRGHYRLVVGERTLDFTPLEGRLEEDLLRRDYRVNALLWKGGAVFGLKGVEEDLRRRLLVPVREENLYQDHLRSLRGVRLAATLGFGLPRRTREALGRHARFLQAHPEALPARERVKEELARLLLSPRAAFGLRLLERVGLLGVYLPELALLVGLHQGGVHHLPAWEHTLSAVFHLLWLWPEAPLEARLAALFHDVGKPLTRRFDPEVGRFRFLGHAEVGAEIARASLFWLRFPKEVVERVAGLVRRHMDRLPEERKALRRFFLRRQDLLPDLVYLMAADRLATRGVEREAWEVLGRYEEVLKDPLPQRPLLSGEEVMALLGLQEGPEVGRALKALLEAQAEGRVGTKEEARAFLLYWRGGREAQASGTPDHPH.

Position 19-22 (19-22 (GAVR)) interacts with CTP. Residues Asp32 and Asp34 each coordinate Mg(2+). CTP-binding positions include 90–91 (RD), Asn95, 130–139 (DHLRSLRGVR), and Arg175.

The protein belongs to the tRNA nucleotidyltransferase/poly(A) polymerase family. Mg(2+) is required as a cofactor.

The catalysed reaction is a tRNA precursor + 2 CTP = a tRNA with a 3' CC end + 2 diphosphate. In terms of biological role, tRNA nucleotidyltransferase involved in the synthesis of the tRNA CCA terminus. Adds the two cytidine residues to tRNA. The protein is CC-adding tRNA nucleotidyltransferase of Thermus thermophilus (strain ATCC BAA-163 / DSM 7039 / HB27).